The chain runs to 320 residues: Beta-ketoacyl-[acyl-carrier-protein] synthase III (320 aa).

Residues Cys-113 and His-247 contribute to the active site. An ACP-binding region spans residues 248–252 (QANRR). Asn-277 is an active-site residue.

This sequence belongs to the thiolase-like superfamily. FabH family. As to quaternary structure, homodimer.

The protein localises to the cytoplasm. The enzyme catalyses malonyl-[ACP] + acetyl-CoA + H(+) = 3-oxobutanoyl-[ACP] + CO2 + CoA. The protein operates within lipid metabolism; fatty acid biosynthesis. Functionally, catalyzes the condensation reaction of fatty acid synthesis by the addition to an acyl acceptor of two carbons from malonyl-ACP. Catalyzes the first condensation reaction which initiates fatty acid synthesis and may therefore play a role in governing the total rate of fatty acid production. Possesses both acetoacetyl-ACP synthase and acetyl transacylase activities. Its substrate specificity determines the biosynthesis of branched-chain and/or straight-chain of fatty acids. This chain is Beta-ketoacyl-[acyl-carrier-protein] synthase III, found in Acidiphilium cryptum (strain JF-5).